A 37-amino-acid polypeptide reads, in one-letter code: Mating pheromone Er-22 (37 aa).

Disulfide bonds link cysteine 3-cysteine 18, cysteine 10-cysteine 32, and cysteine 15-cysteine 24.

The protein localises to the secreted. Mating ciliate pheromones (or gamones) are diffusible extracellular communication signals that distinguish different intraspecific classes of cells commonly referred to as 'mating types'. They prepare the latter for conjugation by changing their cell surface properties. In Euplotes raikovi, this protein is Mating pheromone Er-22 (MAT22).